Consider the following 1312-residue polypeptide: Tetratricopeptide repeat protein 21B (1312 aa).

TPR repeat units lie at residues 4 to 38, 110 to 143, 147 to 180, 182 to 213, 214 to 247, and 325 to 358; these read TDHY…YSND, PKAL…SNRS, LVLR…NKDI, ALIG…YPPF, LPAL…DGAN, and AEVA…DGNH. A coiled-coil region spans residues 365–392; the sequence is VIQCQILQGQLEEAEQQLDFLHEIQESI. 16 TPR repeats span residues 493 to 526, 528 to 560, 564 to 597, 615 to 648, 720 to 753, 755 to 787, 789 to 820, 829 to 861, 881 to 914, 916 to 947, 948 to 981, 983 to 1015, 1019 to 1052, 1193 to 1226, 1228 to 1260, and 1262 to 1295; these read TEPL…DTAC, DFHL…NFKV, PLYH…QEMK, VSIY…FGGT, PHTS…NPQD, SLAN…SGQD, LCCD…EPVS, AKCL…QQRI, SEIC…SQDS, VKLQ…HSFK, EEAA…NPDN, AVLS…SSRT, PGYN…SEWG, EKSW…NKSC, KAYE…SNQS, and PAVG…HPTY.

This sequence belongs to the TTC21 family. As to quaternary structure, component of the IFT complex A (IFT-A).

Its function is as follows. Component of the IFT complex A (IFT-A), a complex required for retrograde ciliary transport and entry into cilia of G protein-coupled receptors (GPCRs). Negatively modulates the SHH signal transduction. The protein is Tetratricopeptide repeat protein 21B (ttc21b) of Xenopus laevis (African clawed frog).